Reading from the N-terminus, the 346-residue chain is Phosphate-binding protein PstS (346 aa).

Residues 1-25 form the signal peptide; that stretch reads MKVMRTTVATVVAATLSMSAFSVFA. Phosphate is bound by residues 34-36, S63, D81, and 164-166; these read ATF and SGT.

It belongs to the PstS family. In terms of assembly, the complex is composed of two ATP-binding proteins (PstB), two transmembrane proteins (PstC and PstA) and a solute-binding protein (PstS).

It localises to the periplasm. In terms of biological role, part of the ABC transporter complex PstSACB involved in phosphate import. This chain is Phosphate-binding protein PstS (pstS), found in Escherichia coli (strain K12).